Reading from the N-terminus, the 4083-residue chain is Dynein axonemal heavy chain 3 (4083 aa).

Disordered regions lie at residues 1–37 (MSDT…VSAN) and 111–132 (DKTS…PSKK). A stem region spans residues 1 to 1357 (MSDTNCSAQK…HVQMITTEAL (1357 aa)). Coiled coils occupy residues 1026–1052 (IKPI…AWLK) and 1108–1133 (RMTE…YLEK). 4 AAA regions span residues 1358–1579 (YGYE…VLTA), 1639–1870 (EALN…LHCK), 2003–2251 (TIPA…VIQG), and 2362–2613 (EFNS…LLRH). Residues 1396–1403 (GPAGTGKT), 1677–1684 (GDPMGGKT), 2041–2048 (GPTGTGKS), and 2401–2408 (GIGGSGRQ) contribute to the ATP site. A stalk region spans residues 2628 to 2927 (FKTLLNSKRQ…NSLEKNIEIC (300 aa)). A coiled-coil region spans residues 2651-2714 (QKLEFASSQV…DEKEANAAAA (64 aa)). AAA stretches follow at residues 3012-3242 (LGDP…EISE) and 3455-3679 (IQNF…QIQM).

The protein belongs to the dynein heavy chain family. In terms of assembly, consists of at least two heavy chains and a number of intermediate and light chains.

It is found in the cytoplasm. It localises to the cytoskeleton. The protein resides in the cilium axoneme. Force generating protein of respiratory cilia. Produces force towards the minus ends of microtubules. Dynein has ATPase activity; the force-producing power stroke is thought to occur on release of ADP. Involved in sperm motility; implicated in sperm flagellar assembly. This chain is Dynein axonemal heavy chain 3 (Dnah3), found in Mus musculus (Mouse).